Consider the following 240-residue polypeptide: Predicted GPI-anchored protein 58 (240 aa).

The signal sequence occupies residues methionine 1–alanine 18. The tract at residues histidine 41 to threonine 216 is disordered. The segment covering threonine 51 to proline 86 has biased composition (pro residues). Over residues glutamate 87–threonine 103 the composition is skewed to low complexity. 2 stretches are compositionally biased toward pro residues: residues proline 104 to proline 137 and alanine 153 to serine 192. Positions alanine 193–threonine 216 are enriched in low complexity. An N-linked (GlcNAc...) asparagine glycan is attached at asparagine 207. Glycine 219 carries the GPI-anchor amidated glycine lipid modification. Positions alanine 220–leucine 240 are cleaved as a propeptide — removed in mature form.

The protein localises to the cell membrane. This Candida albicans (strain SC5314 / ATCC MYA-2876) (Yeast) protein is Predicted GPI-anchored protein 58 (PGA58).